A 173-amino-acid polypeptide reads, in one-letter code: Large ribosomal subunit protein bL12m (173 aa).

Residues Met-1–Ala-33 constitute a mitochondrion transit peptide.

It belongs to the bacterial ribosomal protein bL12 family. As to quaternary structure, component of the mitochondrial large ribosomal subunit (mt-LSU). Mature yeast 74S mitochondrial ribosomes consist of a small (37S) and a large (54S) subunit. The 37S small subunit contains a 15S ribosomal RNA (15S mt-rRNA) and at least 32 different proteins. The 54S large subunit contains a 21S rRNA (21S mt-rRNA) and at least 45 different proteins.

Its subcellular location is the mitochondrion. Functionally, component of the mitochondrial ribosome (mitoribosome), a dedicated translation machinery responsible for the synthesis of mitochondrial genome-encoded proteins, including at least some of the essential transmembrane subunits of the mitochondrial respiratory chain. The mitoribosomes are attached to the mitochondrial inner membrane and translation products are cotranslationally integrated into the membrane. The polypeptide is Large ribosomal subunit protein bL12m (mrpl12) (Schizosaccharomyces pombe (strain 972 / ATCC 24843) (Fission yeast)).